Consider the following 488-residue polypeptide: Solanidine UDP-glucose glucosyltransferase 1 (488 aa).

The active-site Proton acceptor is the His23. Residue His23 participates in an anthocyanidin binding. Asp127 acts as the Charge relay in catalysis. Val352, Gln354, His369, Asn373, Ser374, and Glu377 together coordinate UDP-alpha-D-glucose. Residue Ala392 participates in an anthocyanidin binding. Residues Asp393 and Gln394 each contribute to the UDP-alpha-D-glucose site.

This sequence belongs to the UDP-glycosyltransferase family. As to expression, expressed in the shoot apical meristem (SAM) and tuber.

It carries out the reaction solasodine + UDP-alpha-D-glucose = solasodine 3-beta-D-glucoside + UDP + H(+). It catalyses the reaction solanidine + UDP-alpha-D-glucose = solanidine 3-O-beta-D-glucopyranoside + UDP + H(+). The enzyme catalyses tomatidine + UDP-alpha-D-glucose = tomatidine 3-O-beta-D-glucopyranoside + UDP + H(+). Its function is as follows. Glucosyltransferase involved in the glucosylation of the steroidal alkaloid aglycons solanidine, solasodine and tomatidine to produce their corresponding glycoalkaloids. In Solanum tuberosum (Potato), this protein is Solanidine UDP-glucose glucosyltransferase 1.